The chain runs to 436 residues: Gamma-glutamyl phosphate reductase (436 aa).

This sequence belongs to the gamma-glutamyl phosphate reductase family.

It is found in the cytoplasm. It catalyses the reaction L-glutamate 5-semialdehyde + phosphate + NADP(+) = L-glutamyl 5-phosphate + NADPH + H(+). It participates in amino-acid biosynthesis; L-proline biosynthesis; L-glutamate 5-semialdehyde from L-glutamate: step 2/2. Catalyzes the NADPH-dependent reduction of L-glutamate 5-phosphate into L-glutamate 5-semialdehyde and phosphate. The product spontaneously undergoes cyclization to form 1-pyrroline-5-carboxylate. The chain is Gamma-glutamyl phosphate reductase from Salinibacter ruber (strain DSM 13855 / M31).